Consider the following 161-residue polypeptide: Nucleotide-binding protein Shewmr4_3156 (161 aa).

This sequence belongs to the YajQ family.

In terms of biological role, nucleotide-binding protein. The sequence is that of Nucleotide-binding protein Shewmr4_3156 from Shewanella sp. (strain MR-4).